The following is a 292-amino-acid chain: Hypoxia responsive morphology factor A (292 aa).

The Bipartite nuclear localization signal signature appears at 48-70 (RRNGRRRNLEYVAQHRRKIARKI). Residues 156 to 186 (GKEHYSLHLSTLPAIRNAFGDVIFDAIERSP) are RNA recognition motif (RRM)-like domain.

The protein belongs to the hrmA family.

Its subcellular location is the nucleus. Hypoxia responsive morphology factor that modulates the expression of the subtelomeric hrmA-associated cluster (HAC) containing genes that alter the hyphal surface (such as reduced total chitin or increased beta-glucan exposure) and perturb inter-hyphal interactions within the developing biofilms, resulting in a loss of vertically aligned polarized growing filaments. Consequently, this hypoxia-typic morphotype (called H-MORPH) with altered biofilm architecture leads to increased hypoxia fitness, increased host inflammation, rapid disease progression, and mortality in a murine model of invasive aspergillosis. The polypeptide is Hypoxia responsive morphology factor A (Aspergillus fumigatus (strain CBS 144.89 / FGSC A1163 / CEA10) (Neosartorya fumigata)).